Reading from the N-terminus, the 525-residue chain is GMP synthase [glutamine-hydrolyzing] (525 aa).

The Glutamine amidotransferase type-1 domain maps to 9-207 (KILILDFGSQ…IVDICGCDTL (199 aa)). Cys86 serves as the catalytic Nucleophile. Active-site residues include His181 and Glu183. The GMPS ATP-PPase domain maps to 208–400 (WTPANIAQDA…LGLPYDMVYR (193 aa)). Residue 235-241 (SGGVDSS) coordinates ATP.

As to quaternary structure, homodimer.

It carries out the reaction XMP + L-glutamine + ATP + H2O = GMP + L-glutamate + AMP + diphosphate + 2 H(+). It participates in purine metabolism; GMP biosynthesis; GMP from XMP (L-Gln route): step 1/1. Catalyzes the synthesis of GMP from XMP. This is GMP synthase [glutamine-hydrolyzing] from Marinomonas sp. (strain MWYL1).